The primary structure comprises 238 residues: ATP synthase subunit a (238 aa).

Transmembrane regions (helical) follow at residues 18-38 (LTIL…VFWA), 75-95 (YSLL…LGLM), 112-132 (NFGV…IEGI), 179-199 (VVTG…PLAF), and 203-223 (IVWT…FIIL).

The protein belongs to the ATPase A chain family. In terms of assembly, F-type ATPases have 2 components, CF(1) - the catalytic core - and CF(0) - the membrane proton channel. CF(1) has five subunits: alpha(3), beta(3), gamma(1), delta(1), epsilon(1). CF(0) has three main subunits: a(1), b(2) and c(9-12). The alpha and beta chains form an alternating ring which encloses part of the gamma chain. CF(1) is attached to CF(0) by a central stalk formed by the gamma and epsilon chains, while a peripheral stalk is formed by the delta and b chains.

It localises to the cell membrane. Functionally, key component of the proton channel; it plays a direct role in the translocation of protons across the membrane. This is ATP synthase subunit a from Streptococcus agalactiae serotype Ia (strain ATCC 27591 / A909 / CDC SS700).